The sequence spans 413 residues: Zeaxanthin glucosyltransferase (413 aa).

It belongs to the UDP-glycosyltransferase family.

It catalyses the reaction all-trans-zeaxanthin + 2 UDP-alpha-D-glucose = zeaxanthin bis(beta-D-glucoside) + 2 UDP + 2 H(+). It functions in the pathway carotenoid biosynthesis; zeaxanthin diglucoside biosynthesis. Catalyzes the glycosylation reaction which converts zeaxanthin to zeaxanthin bis(beta-D-glucoside). The reaction proceeds in two steps with the monoglucoside as an intermediate. This Pseudescherichia vulneris (Escherichia vulneris) protein is Zeaxanthin glucosyltransferase (crtX).